A 576-amino-acid chain; its full sequence is MNSLLHHSFLKTVFSSLAIAIVTSSLSSVTIAATHPLDNHPKGEIAASSETAHNPWSGTRLIVAISVDQFSSDLFSEYRGRFRSGMKQLQNGVVYPMAYHSHAATETCPGHSVLLTGDHPARTGIIANNWYDFSVKRADKKVYCSEDPSLSADPQNYQPSVHYLKVPTLGDRMKKANPHSRVISVAGKDRAAIMMGGHMTDQIWFWSDNAYKTLADHKGEMPVTVKTVNEQVTRFMQQDEAPVMPSVCADHASALKIGNNRIIGLAPASRKAGDFKTFRVTPDYDRTTTDIAIGLIDELKLGHGNAPDLLTVSLSATDAVGHAYGTEGAEMCSQMAGLDDNIARIIAALDSNGVPYVLVLTADHGGQDVPERAKLRGVETAQRVDPALSPDQLSLRLAERFQLSHNQPLFFANEPQGDWYINRNLPEQTKAQLIQAAKSELSNHPQVAAVFTASELTHIPYPTRSPELWNLAERAKASFDPLRSGDLIVLLKPRVTPIAKPVSYVATHGSAWDYDRRVPIIFYTPHASGFEQPMPVETVDIMPSLAALLQIPLRKGEVDGRCLDLDPTEATTCPVK.

A signal peptide spans 1 to 32; that stretch reads MNSLLHHSFLKTVFSSLAIAIVTSSLSSVTIA. Positions 68 and 107 each coordinate Zn(2+). The active-site Phosphothreonine intermediate is the Thr-107. Cys-108 and Cys-144 form a disulfide bridge. Substrate-binding positions include Asn-128 and 188–190; that span reads KDR. Cys-248 and Cys-332 are disulfide-bonded. Positions 318, 322, 363, 364, and 508 each coordinate Zn(2+). An intrachain disulfide couples Cys-562 to Cys-573.

Monomer. Zn(2+) serves as cofactor.

It carries out the reaction a phosphate monoester + H2O = an alcohol + phosphate. In terms of biological role, alkaline phosphatase with broad substrate specificity. Has phosphatase activity towards nucleotide and sugar phosphates with a preference to nucleotide phosphates. Has no phosphodiesterase activity. The sequence is that of Alkaline phosphatase PhoD from Zymomonas mobilis subsp. mobilis (strain ATCC 31821 / ZM4 / CP4).